The chain runs to 281 residues: ATP phosphoribosyltransferase (281 aa).

It belongs to the ATP phosphoribosyltransferase family. Long subfamily. Requires Mg(2+) as cofactor.

The protein localises to the cytoplasm. The enzyme catalyses 1-(5-phospho-beta-D-ribosyl)-ATP + diphosphate = 5-phospho-alpha-D-ribose 1-diphosphate + ATP. It participates in amino-acid biosynthesis; L-histidine biosynthesis; L-histidine from 5-phospho-alpha-D-ribose 1-diphosphate: step 1/9. Its activity is regulated as follows. Feedback inhibited by histidine. In terms of biological role, catalyzes the condensation of ATP and 5-phosphoribose 1-diphosphate to form N'-(5'-phosphoribosyl)-ATP (PR-ATP). Has a crucial role in the pathway because the rate of histidine biosynthesis seems to be controlled primarily by regulation of HisG enzymatic activity. The polypeptide is ATP phosphoribosyltransferase (Corynebacterium jeikeium (strain K411)).